Consider the following 458-residue polypeptide: Protein amnionless (458 aa).

Residues 1–19 (MGALGRVLLWLQLCAMTRA) form the signal peptide. Residues 20–362 (AYKLWVPNTS…ELNQSSSGAG (343 aa)) lie on the Extracellular side of the membrane. N-linked (GlcNAc...) asparagine glycosylation occurs at Asn-27. Cystine bridges form between Cys-43/Cys-96, Cys-137/Cys-213, Cys-205/Cys-211, Cys-223/Cys-249, Cys-234/Cys-250, and Cys-239/Cys-253. An interaction with CUBN region spans residues 67-87 (SDMLLPLDGELVLASGAALSA). Residues 203–254 (QACTDASGCVCGNAEMLPWICASLLQPLGGRCPQAACQDPLLPQGQCCDLCG) enclose the VWFC domain. The N-linked (GlcNAc...) asparagine glycan is linked to Asn-355. Residues 363 to 383 (LAGGVAALVLLALLGTVLLLL) form a helical membrane-spanning segment. At 384–458 (HRSGRLRWRR…LFAGEAEAEA (75 aa)) the chain is on the cytoplasmic side.

Interacts (via extracellular region) with CUBN/cubilin. This gives rise to a huge complex containing one AMN chain and three CUBN chains. Post-translationally, N-glycosylated. A soluble form arises by proteolytic removal of the membrane anchor. In terms of tissue distribution, expressed in polarized epithelial cells which are specialized in resorption or transport, specifically kidney proximal tubules and intestinal epithelium.

The protein localises to the apical cell membrane. It is found in the cell membrane. It localises to the endosome membrane. Its subcellular location is the membrane. The protein resides in the coated pit. Its function is as follows. Membrane-bound component of the endocytic receptor formed by AMN and CUBN. Required for normal CUBN glycosylation and trafficking to the cell surface. The complex formed by AMN and CUBN is required for efficient absorption of vitamin B12. Required for normal CUBN-mediated protein transport in the kidney. The polypeptide is Protein amnionless (Amn) (Mus musculus (Mouse)).